A 337-amino-acid polypeptide reads, in one-letter code: Retrovirus-related Pol polyprotein from type-1 retrotransposable element R1 (337 aa).

One can recognise a Reverse transcriptase domain in the interval 1-118 (GCPQGSISGP…KSARYLGVCM (118 aa)). The nucleic acid-binding endonuclease stretch occupies residues 253–337 (KRARSCKLMK…ACPCGAPRED (85 aa)).

The enzyme catalyses DNA(n) + a 2'-deoxyribonucleoside 5'-triphosphate = DNA(n+1) + diphosphate. In Nasonia vitripennis (Parasitic wasp), this protein is Retrovirus-related Pol polyprotein from type-1 retrotransposable element R1.